The following is a 135-amino-acid chain: Large-conductance mechanosensitive channel (135 aa).

2 consecutive transmembrane segments (helical) span residues 10–30 (FAMR…GAFG) and 76–96 (GSFI…FCVI).

Belongs to the MscL family. In terms of assembly, homopentamer.

The protein resides in the cell inner membrane. Functionally, channel that opens in response to stretch forces in the membrane lipid bilayer. May participate in the regulation of osmotic pressure changes within the cell. This is Large-conductance mechanosensitive channel from Campylobacter concisus (strain 13826).